Consider the following 426-residue polypeptide: Glutamyl-tRNA reductase (426 aa).

Substrate-binding positions include 49–52 (TCNR), S101, 106–108 (EPQ), and Q112. Residue C50 is the Nucleophile of the active site. Residue 181 to 186 (GAGETI) coordinates NADP(+). A disordered region spans residues 404–426 (DRLFPEKPGLPTSPHSYPDREDR).

This sequence belongs to the glutamyl-tRNA reductase family. As to quaternary structure, homodimer.

The enzyme catalyses (S)-4-amino-5-oxopentanoate + tRNA(Glu) + NADP(+) = L-glutamyl-tRNA(Glu) + NADPH + H(+). Its pathway is porphyrin-containing compound metabolism; protoporphyrin-IX biosynthesis; 5-aminolevulinate from L-glutamyl-tRNA(Glu): step 1/2. Catalyzes the NADPH-dependent reduction of glutamyl-tRNA(Glu) to glutamate 1-semialdehyde (GSA). In Xanthomonas campestris pv. phaseoli, this protein is Glutamyl-tRNA reductase.